The primary structure comprises 422 residues: Serine--tRNA ligase (422 aa).

229 to 231 (TAE) serves as a coordination point for L-serine. Residue 260 to 262 (RAE) participates in ATP binding. Residue Glu283 participates in L-serine binding. 347 to 350 (EISS) contributes to the ATP binding site. Ser383 is an L-serine binding site.

This sequence belongs to the class-II aminoacyl-tRNA synthetase family. Type-1 seryl-tRNA synthetase subfamily. In terms of assembly, homodimer. The tRNA molecule binds across the dimer.

It is found in the cytoplasm. It carries out the reaction tRNA(Ser) + L-serine + ATP = L-seryl-tRNA(Ser) + AMP + diphosphate + H(+). The catalysed reaction is tRNA(Sec) + L-serine + ATP = L-seryl-tRNA(Sec) + AMP + diphosphate + H(+). The protein operates within aminoacyl-tRNA biosynthesis; selenocysteinyl-tRNA(Sec) biosynthesis; L-seryl-tRNA(Sec) from L-serine and tRNA(Sec): step 1/1. In terms of biological role, catalyzes the attachment of serine to tRNA(Ser). Is also able to aminoacylate tRNA(Sec) with serine, to form the misacylated tRNA L-seryl-tRNA(Sec), which will be further converted into selenocysteinyl-tRNA(Sec). The sequence is that of Serine--tRNA ligase from Halothermothrix orenii (strain H 168 / OCM 544 / DSM 9562).